Here is an 848-residue protein sequence, read N- to C-terminus: Trimethylamine-N-oxide reductase 1 (848 aa).

Residues methionine 1 to alanine 39 constitute a signal peptide (tat-type signal). A Mo-bis(molybdopterin guanine dinucleotide)-binding site is contributed by serine 191.

It belongs to the prokaryotic molybdopterin-containing oxidoreductase family. Interacts with the N-terminal domain of TorC. The cofactor is Mo-bis(molybdopterin guanine dinucleotide). In terms of processing, predicted to be exported by the Tat system. The position of the signal peptide cleavage has not been experimentally proven.

It is found in the periplasm. It catalyses the reaction trimethylamine + 2 Fe(III)-[cytochrome c] + H2O = trimethylamine N-oxide + 2 Fe(II)-[cytochrome c] + 3 H(+). In terms of biological role, reduces trimethylamine-N-oxide (TMAO) into trimethylamine; an anaerobic reaction coupled to energy-yielding reactions. The protein is Trimethylamine-N-oxide reductase 1 (torA) of Escherichia coli O157:H7.